A 133-amino-acid chain; its full sequence is Small ribosomal subunit protein uS8c (133 aa).

Belongs to the universal ribosomal protein uS8 family. As to quaternary structure, part of the 30S ribosomal subunit.

The protein resides in the plastid. The protein localises to the chloroplast. Its function is as follows. One of the primary rRNA binding proteins, it binds directly to 16S rRNA central domain where it helps coordinate assembly of the platform of the 30S subunit. In Mesostigma viride (Green alga), this protein is Small ribosomal subunit protein uS8c (rps8).